Here is a 700-residue protein sequence, read N- to C-terminus: Putative ankyrin repeat protein FPV018 (700 aa).

ANK repeat units follow at residues aspartate 29 to methionine 59, asparagine 63 to glycine 92, arginine 126 to methionine 155, methionine 204 to threonine 233, alanine 236 to serine 265, asparagine 270 to isoleucine 299, aspartate 301 to cysteine 332, cysteine 395 to valine 424, tyrosine 428 to glutamate 457, tyrosine 461 to glutamine 490, and aspartate 494 to phenylalanine 523.

This Fowlpox virus (strain NVSL) (FPV) protein is Putative ankyrin repeat protein FPV018.